The following is a 398-amino-acid chain: MKYLTILGSTGSIGTSTLTVIKQNPDKFTVRALVAKNNFTLMTKQCLDFRPSWVGMVDKRAARELKANLAQLGIAINIISGNQAACELAALKEIDTVMAAIAGVDGLLSTLSALRAGKRVLLANKESLVSCGRLFMNEVHQHNAQLLPVDSEHNAIFQILPEPIQRQLGCLSLSKYGVSQIILTGSGGPFRQTPLDALATITSDQACIHPNWSMGRKISVDSATMMNKGLEYIEARCLFNASTDQIEVLLHPQSIFHSMVRYVDGSVLAQLAYPDMRIPITYALSYPTRVPIKVTPLNFLQLGTLSFDQPDNKRYPCLQLAIEASKLGQAATTTLNAANEVAVAAFLQRKIRFTDIASVNQMVLDKINLEEPSSIEEVLCIDRQARINAHLSIRYLAL.

Positions 10, 11, 12, 13, 38, and 124 each coordinate NADPH. A 1-deoxy-D-xylulose 5-phosphate-binding site is contributed by Lys-125. Glu-126 serves as a coordination point for NADPH. Mn(2+) is bound at residue Asp-150. Ser-151, Glu-152, Ser-186, and His-209 together coordinate 1-deoxy-D-xylulose 5-phosphate. A Mn(2+)-binding site is contributed by Glu-152. Gly-215 is an NADPH binding site. The 1-deoxy-D-xylulose 5-phosphate site is built by Ser-222, Asn-227, Lys-228, and Glu-231. Glu-231 lines the Mn(2+) pocket.

The protein belongs to the DXR family. The cofactor is Mg(2+). It depends on Mn(2+) as a cofactor.

The enzyme catalyses 2-C-methyl-D-erythritol 4-phosphate + NADP(+) = 1-deoxy-D-xylulose 5-phosphate + NADPH + H(+). It functions in the pathway isoprenoid biosynthesis; isopentenyl diphosphate biosynthesis via DXP pathway; isopentenyl diphosphate from 1-deoxy-D-xylulose 5-phosphate: step 1/6. Catalyzes the NADPH-dependent rearrangement and reduction of 1-deoxy-D-xylulose-5-phosphate (DXP) to 2-C-methyl-D-erythritol 4-phosphate (MEP). The protein is 1-deoxy-D-xylulose 5-phosphate reductoisomerase of Baumannia cicadellinicola subsp. Homalodisca coagulata.